The chain runs to 125 residues: MREIKTPKAPVPVGPYSQAVEVNGFLFISGQIGINPETGKLVEGFKEQVIQIFKNVDAILEEAGLKRENIVKVTIYITDIKKFKELNEIYEDYFKDVSVKPARVTVGVKELPLNAEVEIEIVAVK.

The protein belongs to the RutC family.

The polypeptide is RutC family protein aq_364 (Aquifex aeolicus (strain VF5)).